A 501-amino-acid polypeptide reads, in one-letter code: Aspartyl/glutamyl-tRNA(Asn/Gln) amidotransferase subunit B (501 aa).

The disordered stretch occupies residues 271-299 (VQETRHYQETDGSTSKGRPKETAEDYRYF). Basic and acidic residues predominate over residues 288–299 (RPKETAEDYRYF).

The protein belongs to the GatB/GatE family. GatB subfamily. As to quaternary structure, heterotrimer of A, B and C subunits.

The enzyme catalyses L-glutamyl-tRNA(Gln) + L-glutamine + ATP + H2O = L-glutaminyl-tRNA(Gln) + L-glutamate + ADP + phosphate + H(+). It carries out the reaction L-aspartyl-tRNA(Asn) + L-glutamine + ATP + H2O = L-asparaginyl-tRNA(Asn) + L-glutamate + ADP + phosphate + 2 H(+). Allows the formation of correctly charged Asn-tRNA(Asn) or Gln-tRNA(Gln) through the transamidation of misacylated Asp-tRNA(Asn) or Glu-tRNA(Gln) in organisms which lack either or both of asparaginyl-tRNA or glutaminyl-tRNA synthetases. The reaction takes place in the presence of glutamine and ATP through an activated phospho-Asp-tRNA(Asn) or phospho-Glu-tRNA(Gln). The protein is Aspartyl/glutamyl-tRNA(Asn/Gln) amidotransferase subunit B of Corynebacterium diphtheriae (strain ATCC 700971 / NCTC 13129 / Biotype gravis).